The primary structure comprises 132 residues: SH2 domain-containing protein 1B2 (132 aa).

The 97-residue stretch at 5 to 101 folds into the SH2 domain; that stretch reads YYHGCLTKRE…GMVVHLSNPI (97 aa).

In terms of assembly, interacts with SLAMF1 (phosphorylated). Interacts with CD244. Interacts with Src kinases HCK, LYN, FYN, FGR and LCK (via kinase domains). Expressed in spleen. Expressed in macrophages, CD8(+) T-Cells and NK cells. Conflictingly found only in NK cells.

It is found in the cytoplasm. Cytoplasmic adapter regulating receptors of the signaling lymphocytic activation molecule (SLAM) family. In SLAM signaling may cooperate with Sh2d1a/SAP. Plays a role in regulation of effector functions of natural killer (NK) cells by controlling signal transduction through Cd244/2b4. However, conflicting results are reported which may reflect the use of different strain backgrounds. Proposed to act as an inhibitor of Cd244-mediated NK cell function including cytotoxicity and IFN-gamma production, the latter found also by triggering Klra4 and Klrk1 next to Cd244. Seems to positively regulate Cd244- and Cd84-dependent NK cell functions implicating Cd244-mediated phosphorylation of Vav1. This chain is SH2 domain-containing protein 1B2 (Sh2d1b2), found in Mus musculus (Mouse).